We begin with the raw amino-acid sequence, 139 residues long: 3-hydroxyacyl-[acyl-carrier-protein] dehydratase FabZ (139 aa).

The active site involves His47.

The protein belongs to the thioester dehydratase family. FabZ subfamily.

It is found in the cytoplasm. The catalysed reaction is a (3R)-hydroxyacyl-[ACP] = a (2E)-enoyl-[ACP] + H2O. Its function is as follows. Involved in unsaturated fatty acids biosynthesis. Catalyzes the dehydration of short chain beta-hydroxyacyl-ACPs and long chain saturated and unsaturated beta-hydroxyacyl-ACPs. The sequence is that of 3-hydroxyacyl-[acyl-carrier-protein] dehydratase FabZ from Clostridium perfringens (strain ATCC 13124 / DSM 756 / JCM 1290 / NCIMB 6125 / NCTC 8237 / Type A).